A 350-amino-acid polypeptide reads, in one-letter code: Pleckstrin (350 aa).

One can recognise a PH 1 domain in the interval Lys-4–Lys-101. At Lys-64 the chain carries N6-acetyllysine. 2 positions are modified to phosphoserine: Ser-113 and Ser-117. The DEP domain maps to Pro-136–Asp-221. In terms of domain architecture, PH 2 spans Val-244–Arg-347.

Major protein kinase C substrate of platelets. This Mus musculus (Mouse) protein is Pleckstrin (Plek).